Consider the following 100-residue polypeptide: Small ribosomal subunit protein uS14c (100 aa).

The protein belongs to the universal ribosomal protein uS14 family. As to quaternary structure, part of the 30S ribosomal subunit.

Its subcellular location is the plastid. It localises to the chloroplast. In terms of biological role, binds 16S rRNA, required for the assembly of 30S particles. The sequence is that of Small ribosomal subunit protein uS14c from Carica papaya (Papaya).